Reading from the N-terminus, the 257-residue chain is UPF0246 protein KPK_4750 (257 aa).

The protein belongs to the UPF0246 family.

The chain is UPF0246 protein KPK_4750 from Klebsiella pneumoniae (strain 342).